Consider the following 185-residue polypeptide: MRATLAIALTLATTSPAFAAGGGWNLGNTDFVVILAFLLFIGILLAAKVPSLIGKQLDNRADSIKSELEEARALREEAQTLLASYERKQQDVQAQAERIVANARDEAAAAAEQAKADLAASIARRLTAAEEQIASAEASAVKEVRDRAITIAVEVADQVISKQMTAADANKLIDAAIQDVEAKLH.

A helical transmembrane segment spans residues 4–24; the sequence is TLAIALTLATTSPAFAAGGGW.

This sequence belongs to the ATPase B chain family. F-type ATPases have 2 components, F(1) - the catalytic core - and F(0) - the membrane proton channel. F(1) has five subunits: alpha(3), beta(3), gamma(1), delta(1), epsilon(1). F(0) has three main subunits: a(1), b(2) and c(10-14). The alpha and beta chains form an alternating ring which encloses part of the gamma chain. F(1) is attached to F(0) by a central stalk formed by the gamma and epsilon chains, while a peripheral stalk is formed by the delta and b chains.

Its subcellular location is the cell inner membrane. Functionally, f(1)F(0) ATP synthase produces ATP from ADP in the presence of a proton or sodium gradient. F-type ATPases consist of two structural domains, F(1) containing the extramembraneous catalytic core and F(0) containing the membrane proton channel, linked together by a central stalk and a peripheral stalk. During catalysis, ATP synthesis in the catalytic domain of F(1) is coupled via a rotary mechanism of the central stalk subunits to proton translocation. Component of the F(0) channel, it forms part of the peripheral stalk, linking F(1) to F(0). The polypeptide is ATP synthase subunit b 1 (Ruegeria sp. (strain TM1040) (Silicibacter sp.)).